A 398-amino-acid polypeptide reads, in one-letter code: O-methyltransferase mpaG' (398 aa).

Serine 144 contributes to the (4E,8E)-10-(4,6-dihydroxy-7-methyl-3-oxo-1,3-dihydro-2-benzofuran-5-yl)-4,8-dimethyldeca-4,8-dienoate binding site. Serine 144 is a 4-farnesyl-3,5-dihydroxy-6-methylphthalide binding site. Serine 144 is a binding site for 6-O-desmethylmycophenolate. Asparagine 197 contacts S-adenosyl-L-homocysteine. Residue tyrosine 199 coordinates (4E,8E)-10-(4,6-dihydroxy-7-methyl-3-oxo-1,3-dihydro-2-benzofuran-5-yl)-4,8-dimethyldeca-4,8-dienoate. Residue tyrosine 199 coordinates 4-farnesyl-3,5-dihydroxy-6-methylphthalide. 6-O-desmethylmycophenolate is bound at residue tyrosine 199. Positions 203, 237, 239, 244, 245, 264, and 265 each coordinate S-adenosyl-L-homocysteine. Aspartate 264 lines the S-adenosyl-L-methionine pocket. Arginine 265 and glutamine 267 together coordinate (4E,8E)-10-(4,6-dihydroxy-7-methyl-3-oxo-1,3-dihydro-2-benzofuran-5-yl)-4,8-dimethyldeca-4,8-dienoate. Residue arginine 265 participates in 6-O-desmethylmycophenolate binding. Positions 286, 287, and 302 each coordinate S-adenosyl-L-homocysteine. Serine 303 provides a ligand contact to (4E,8E)-10-(4,6-dihydroxy-7-methyl-3-oxo-1,3-dihydro-2-benzofuran-5-yl)-4,8-dimethyldeca-4,8-dienoate. A 4-farnesyl-3,5-dihydroxy-6-methylphthalide-binding site is contributed by serine 303. Residue serine 303 participates in 6-O-desmethylmycophenolate binding. The Proton acceptor role is filled by histidine 306. Active-site residues include glutamate 335 and glutamate 362.

Belongs to the class I-like SAM-binding methyltransferase superfamily. Cation-independent O-methyltransferase family. In terms of assembly, homodimer.

It localises to the cytoplasm. It is found in the cytosol. The catalysed reaction is (4E,8E)-10-(4,6-dihydroxy-7-methyl-3-oxo-1,3-dihydro-2-benzofuran-5-yl)-4,8-dimethyldeca-4,8-dienoate + S-adenosyl-L-methionine = (4E,8E)-10-(4-hydroxy-6-methoxy-7-methyl-3-oxo-1,3-dihydro-2-benzofuran-5-yl)-4,8-dimethyldeca-4,8-dienoate + S-adenosyl-L-homocysteine + H(+). It carries out the reaction 4-farnesyl-3,5-dihydroxy-6-methylphthalide + S-adenosyl-L-methionine = 4-farnesyl-3,5-dihydroxy-6-methoxylphthalide + S-adenosyl-L-homocysteine + H(+). The enzyme catalyses 6-O-desmethylmycophenolate + S-adenosyl-L-methionine = mycophenolate + S-adenosyl-L-homocysteine + H(+). The protein operates within secondary metabolite biosynthesis; terpenoid biosynthesis. O-methyltransferase; part of the gene cluster that mediates the biosynthesis of mycophenolic acid (MPA), the first isolated antibiotic natural product in the world obtained from a culture of Penicillium brevicompactum in 1893. MpaG' catalyzes the 5-O-methylation of three precursors in MPA biosynthesis including demethylmycophenolic acid (DMMPA), 4-farnesyl-3,5-dihydroxy-6-methylphthalide (FDHMP), and an intermediate containing three fewer carbon atoms compared to FDHMP (FDHMP-3C) with different catalytic efficiencies. The first step of the pathway is the synthesis of 5-methylorsellinic acid (5MOA) by the cytosolic polyketide synthase mpaC. 5MOA is then converted to the phthalide compound 5,7-dihydroxy-4,6-dimethylphthalide (DHMP) by the endoplasmic reticulum-bound cytochrome P450 monooxygenase mpaDE. MpaDE first catalyzes hydroxylation of 5-MOA to 4,6-dihydroxy-2-(hydroxymethyl)-3-methylbenzoic acid (DHMB). MpaDE then acts as a lactone synthase that catalyzes the ring closure to convert DHMB into DHMP. The next step is the prenylation of DHMP by the Golgi apparatus-associated prenyltransferase mpaA to yield farnesyl-DHMP (FDHMP). The ER-bound oxygenase mpaB then mediates the oxidative cleavage the C19-C20 double bond in FDHMP to yield FDHMP-3C via a mycophenolic aldehyde intermediate. The O-methyltransferase mpaG catalyzes the methylation of FDHMP-3C to yield MFDHMP-3C. MpaG and mpaB can also switch the order in which they act and, in this case, the conversion of FDHMP to MFDHMP-3C can take place via 5-O-methyl-FDHMP (MFDHMP). After the cytosolic methylation of FDHMP-3C, MFDHMP-3C enters into peroxisomes probably via free diffusion due to its low molecular weight. Upon a peroxisomal CoA ligation reaction, catalyzed by a beta-oxidation component enzyme acyl-CoA ligase ACL891, MFDHMP-3C-CoA would then be restricted to peroxisomes for the following beta-oxidation pathway steps. The peroxisomal beta-oxidation machinery than converts MFDHMP-3C-CoA into MPA_CoA, via a beta-oxidation chain-shortening process. Finally mpaH acts as a peroxisomal acyl-CoA hydrolase with high substrate specificity toward MPA-CoA to release the final product MPA. MpaH can also hydrolyze DMMPA-CoA to release demethylmycophenolic acid (DMMPA) that is further converted to MPA by mpaG. The chain is O-methyltransferase mpaG' from Penicillium brevicompactum.